The sequence spans 350 residues: Glycosyltransferase 8 domain-containing protein 2 (350 aa).

The Cytoplasmic segment spans residues 1–6 (MALLRK). The chain crosses the membrane as a helical; Signal-anchor for type II membrane protein span at residues 7–24 (INQVLLFLLIVTLCGILY). Residues 25-349 (KKVHKGTMLR…AGIFKLHHPN (325 aa)) are Lumenal-facing. An N-linked (GlcNAc...) asparagine glycan is attached at N234.

Belongs to the glycosyltransferase 8 family.

The protein localises to the membrane. This chain is Glycosyltransferase 8 domain-containing protein 2 (GLT8D2), found in Bos taurus (Bovine).